A 234-amino-acid polypeptide reads, in one-letter code: MMKSFLLVVNIVALTLPFLAAEVQNQEQPACCGNDERLFEQKKVLYLLSYPVLNNYLRTAPSYYQNRASVPINNPYLCHLYYVPSFVLWAQGQIPKGPVSTDIHQSTMQYHQAKHPSFMAILSKKILGKATILSTDAIAAPEQTPVSAAQPTVSAGDTPEVSSQFIDTPDTSVLAEEARESPEDTPEISEFINAPDTAVPSEEPRESAEDTPEISSEFIFSPETSTGPAIASMA.

Residues 1-21 (MMKSFLLVVNIVALTLPFLAA) form the signal peptide. 3 consecutive repeat copies span residues 127-153 (LGKA…QPTV), 154-179 (SAGD…EEAR), and 180-207 (ESPE…PRES). Residues 127–207 (LGKATILSTD…AVPSEEPRES (81 aa)) are 3 X 27 AA tandem repeats. The disordered stretch occupies residues 143–234 (QTPVSAAQPT…STGPAIASMA (92 aa)). The O-linked (GalNAc...) threonine glycan is linked to threonine 144. The span at 144-171 (TPVSAAQPTVSAGDTPEVSSQFIDTPDT) shows a compositional bias: polar residues. Threonine 158 carries the phosphothreonine modification. Phosphoserine; alternate is present on serine 162. Serine 162 carries O-linked (GalNAc...) serine; alternate glycosylation.

Belongs to the kappa-casein family. As to expression, mammary gland specific. Secreted in milk.

It localises to the secreted. Kappa-casein stabilizes micelle formation, preventing casein precipitation in milk. In Cavia porcellus (Guinea pig), this protein is Kappa-casein (CSN3).